Reading from the N-terminus, the 346-residue chain is DNA-directed RNA polymerases I and III subunit RPAC1 (346 aa).

At Ala2 the chain carries N-acetylalanine.

It belongs to the archaeal Rpo3/eukaryotic RPB3 RNA polymerase subunit family. As to quaternary structure, component of the RNA polymerase I and RNA polymerase III complexes consisting of at least 13 and 17 subunits, respectively. Pol I complex consists of a ten-subunit catalytic core composed of POLR1A/RPA1, POLR1B/RPA2, POLR1C/RPAC1, POLR1D/RPAC2, POLR1H/RPA12, POLR2E/RPABC1, POLR2F/RPABC2, POLR2H/RPABC3, POLR2K/RPABC4 and POLR2L/RPABC5; a mobile stalk subunit POLR1F/RPA43 protruding from the core and additional subunits homologous to general transcription factors POLR1E/RPA49 and POLR1G/RPA34. Part of Pol I pre-initiation complex (PIC), in which Pol I core assembles with RRN3 and promoter-bound UTBF and SL1/TIF-IB complex. Pol III complex consists of a ten-subunit catalytic core composed of POLR3A/RPC1, POLR3B/RPC2, POLR1C/RPAC1, POLR1D/RPAC2, POLR3K/RPC10, POLR2E/RPABC1, POLR2F/RPABC2, POLR2H/RPABC3, POLR2K/RPABC4 and POLR2L/RPABC5; a mobile stalk composed of two subunits POLR3H/RPC8 and CRCP/RPC9, protruding from the core and functioning primarily in transcription initiation; and additional subunits homologous to general transcription factors of the RNA polymerase II machinery, POLR3C/RPC3-POLR3F/RPC6-POLR3G/RPC7 heterotrimer required for transcription initiation and POLR3D/RPC4-POLR3E/RPC5 heterodimer involved in both transcription initiation and termination.

The protein localises to the nucleus. It is found in the cytoplasm. It localises to the cytosol. Functionally, DNA-dependent RNA polymerase catalyzes the transcription of DNA into RNA using the four ribonucleoside triphosphates as substrates. Common component of RNA polymerases I and III which synthesize ribosomal RNA precursors and short non-coding RNAs including 5S rRNA, snRNAs, tRNAs and miRNAs, respectively. POLR1C/RPAC1 is part of the polymerase core and may function as a clamp element that moves to open and close the cleft. The polypeptide is DNA-directed RNA polymerases I and III subunit RPAC1 (POLR1C) (Bos taurus (Bovine)).